The sequence spans 253 residues: Adapter protein MecA (253 aa).

Belongs to the MecA family. As to quaternary structure, homodimer.

Its function is as follows. Enables the recognition and targeting of unfolded and aggregated proteins to the ClpC protease or to other proteins involved in proteolysis. This Streptococcus pyogenes serotype M6 (strain ATCC BAA-946 / MGAS10394) protein is Adapter protein MecA.